A 434-amino-acid chain; its full sequence is O-phosphoseryl-tRNA(Sec) selenium transferase (434 aa).

Residues 1–40 (MGLNITGLIPKHMENRGKLTLKENLKIIENILEQRKAPEN) form a tetramerization region. R71 lines the pyridoxal 5'-phosphate pocket. The interval 92–102 (GRSGNLIDPQP) is phosphate loop (P-loop). Substrate-binding residues include R93, S94, and Q101. An N6-(pyridoxal phosphate)lysine modification is found at K277. R306 provides a ligand contact to substrate.

The protein belongs to the SepSecS family. In terms of assembly, homotetramer. Pyridoxal 5'-phosphate serves as cofactor.

It catalyses the reaction O-phospho-L-seryl-tRNA(Sec) + selenophosphate + H2O = L-selenocysteinyl-tRNA(Sec) + 2 phosphate. It participates in aminoacyl-tRNA biosynthesis; selenocysteinyl-tRNA(Sec) biosynthesis; selenocysteinyl-tRNA(Sec) from L-seryl-tRNA(Sec) (archaeal/eukaryal route): step 2/2. In terms of biological role, converts O-phosphoseryl-tRNA(Sec) to selenocysteinyl-tRNA(Sec) required for selenoprotein biosynthesis. The polypeptide is O-phosphoseryl-tRNA(Sec) selenium transferase (spcS) (Methanocaldococcus jannaschii (strain ATCC 43067 / DSM 2661 / JAL-1 / JCM 10045 / NBRC 100440) (Methanococcus jannaschii)).